Reading from the N-terminus, the 230-residue chain is Phosphoribosylaminoimidazole-succinocarboxamide synthase (230 aa).

Belongs to the SAICAR synthetase family.

The enzyme catalyses 5-amino-1-(5-phospho-D-ribosyl)imidazole-4-carboxylate + L-aspartate + ATP = (2S)-2-[5-amino-1-(5-phospho-beta-D-ribosyl)imidazole-4-carboxamido]succinate + ADP + phosphate + 2 H(+). It functions in the pathway purine metabolism; IMP biosynthesis via de novo pathway; 5-amino-1-(5-phospho-D-ribosyl)imidazole-4-carboxamide from 5-amino-1-(5-phospho-D-ribosyl)imidazole-4-carboxylate: step 1/2. This is Phosphoribosylaminoimidazole-succinocarboxamide synthase from Thermotoga sp. (strain RQ2).